The primary structure comprises 480 residues: Sestrin-2 (480 aa).

N-acetylmethionine is present on M1. Residues 20 to 43 (RGGVAGPETREEHREGQARRGSRG) are disordered. Positions 27-37 (ETREEHREGQA) are enriched in basic and acidic residues. An N-terminal domain; mediates the alkylhydroperoxide reductase activity region spans residues 66–239 (GLEALMSSGR…APSPPSEQGT (174 aa)). The active-site Cysteine sulfenic acid (-SOH) intermediate is the C125. K175 participates in a covalent cross-link: Glycyl lysine isopeptide (Lys-Gly) (interchain with G-Cter in ubiquitin). Disordered stretches follow at residues 221–251 (DAEGSPASQAPSPPSEQGTPPSGDPLNNSGG) and 272–291 (LLRDEGASQEEMENRFELEK). Residues 223–238 (EGSPASQAPSPPSEQG) are compositionally biased toward low complexity. Position 249 is a phosphoserine (S249). The segment at 308–480 (PHPDILCFVE…ALRAITRYMT (173 aa)) is C-terminal domain; mediates TORC1 regulation. Residues 374–377 (TYNT), T386, and E451 contribute to the L-leucine site.

Belongs to the sestrin family. Interacts with the GATOR2 complex which is composed of MIOS, SEC13, SEH1L, WDR24 and WDR59; the interaction is negatively regulated by leucine. Conveys leucine availability via direct interaction with SEH1L and WDR24 components of the GATOR2 complex. Interacts with RRAGA, RRAGB, RRAGC and RRAGD; may function as a guanine nucleotide dissociation inhibitor for RRAGs and regulate them. May interact with the TORC2 complex. Interacts with KEAP1, RBX1, SQSTM and ULK1; to regulate the degradation of KEAP1. May also associate with the complex composed of TSC1, TSC2 and the AMP-responsive protein kinase/AMPK to regulate TORC1 signaling. May interact with PRDX1. Post-translationally, phosphorylated by ULK1 at multiple sites. In terms of processing, ubiquitinated at Lys-175 by RNF167 via 'Lys-63'-linked polyubiquitination in response to leucine deprivation: ubiquitination promotes SESN2-interaction with the GATOR2 complex, leading to inhibit the TORC1 signaling pathway. Deubiquitinated at Lys-175 by STAMBPL1, promoting the TORC1 signaling pathway. Ubiquitinated by RNF186; ubiquitination mediates proteasomal degradation. Detected in heart, liver and skeletal muscles (at protein level).

It localises to the cytoplasm. It catalyses the reaction a hydroperoxide + L-cysteinyl-[protein] = S-hydroxy-L-cysteinyl-[protein] + an alcohol. Its function is as follows. Functions as an intracellular leucine sensor that negatively regulates the mTORC1 signaling pathway through the GATOR complex. In absence of leucine, binds the GATOR subcomplex GATOR2 and prevents mTORC1 signaling. Binding of leucine to SESN2 disrupts its interaction with GATOR2 thereby activating the TORC1 signaling pathway. This stress-inducible metabolic regulator also plays a role in protection against oxidative and genotoxic stresses. May negatively regulate protein translation in response to endoplasmic reticulum stress, via mTORC1. May positively regulate the transcription by NFE2L2 of genes involved in the response to oxidative stress by facilitating the SQSTM1-mediated autophagic degradation of KEAP1. May also mediate TP53 inhibition of TORC1 signaling upon genotoxic stress. Moreover, may prevent the accumulation of reactive oxygen species (ROS) through the alkylhydroperoxide reductase activity born by the N-terminal domain of the protein. Was originally reported to contribute to oxidative stress resistance by reducing PRDX1. However, this could not be confirmed. In Mus musculus (Mouse), this protein is Sestrin-2.